The sequence spans 668 residues: S-adenosyl-L-methionine-dependent tRNA 4-demethylwyosine synthase TYW1B (668 aa).

Residues 37–191 (CVQIVIEMQG…NFRAWKTKFI (155 aa)) enclose the Flavodoxin-like domain. Residues 43–47 (EMQGF) and 130–162 (VFGL…HRVM) each bind FMN. The segment at 202–269 (RKKSCGGHCK…QSLNSIVDVE (68 aa)) is disordered. 2 stretches are compositionally biased toward basic and acidic residues: residues 213–223 (GKCESHQHGSE) and 233–243 (DELHHRDTKEE). Acidic residues predominate over residues 244–255 (EPFESSSEEEFG). In terms of domain architecture, Radical SAM core spans 336–580 (LWNESHRCME…VDLIPEYEIA (245 aa)). 3 residues coordinate [4Fe-4S] cluster: Cys-352, Cys-356, and Cys-359.

Belongs to the TYW1 family. It depends on [4Fe-4S] cluster as a cofactor.

It carries out the reaction N(1)-methylguanosine(37) in tRNA(Phe) + pyruvate + S-adenosyl-L-methionine = 4-demethylwyosine(37) in tRNA(Phe) + 5'-deoxyadenosine + L-methionine + CO2 + H2O. It participates in tRNA modification; wybutosine-tRNA(Phe) biosynthesis. Functionally, probable component of the wybutosine biosynthesis pathway. Wybutosine is a hyper modified guanosine with a tricyclic base found at the 3'-position adjacent to the anticodon of eukaryotic phenylalanine tRNA. Catalyzes the condensation of N-methylguanine with 2 carbon atoms from pyruvate to form the tricyclic 4-demethylwyosine, an intermediate in wybutosine biosynthesis. The sequence is that of S-adenosyl-L-methionine-dependent tRNA 4-demethylwyosine synthase TYW1B (TYW1B) from Homo sapiens (Human).